A 276-amino-acid polypeptide reads, in one-letter code: Transmembrane protein 53 (276 aa).

Residues 170–190 form a helical membrane-spanning segment; sequence LLLLAAFALVVILFHFLLAPF.

This sequence belongs to the TMEM53 family. As to expression, expressed in liver (at protein level).

The protein resides in the nucleus outer membrane. Functionally, negatively regulates bone morphogenetic protein (BMP) signaling in osteoblast lineage cells by blocking cytoplasm-nucleus translocation of phosphorylated SMAD1/5/9 proteins. This Mus musculus (Mouse) protein is Transmembrane protein 53 (Tmem53).